The chain runs to 185 residues: Putative manganese efflux pump MntP (185 aa).

Transmembrane regions (helical) follow at residues 6–26, 41–61, 65–85, 107–127, 132–152, and 164–184; these read IFIISVALAMDAFTIAVACGL, FHFGLFQALMPLLGWLAGLTV, VETYAPWISFFLLAFVGGKMI, LVFLSVATSLDALAVGLSFSI, IAFPCVMIGITALVLTSFGLW, and SHIAERIGGVVLILIGLKLLL.

It belongs to the MntP (TC 9.B.29) family.

It localises to the cell inner membrane. In terms of biological role, probably functions as a manganese efflux pump. The sequence is that of Putative manganese efflux pump MntP from Maridesulfovibrio salexigens (strain ATCC 14822 / DSM 2638 / NCIMB 8403 / VKM B-1763) (Desulfovibrio salexigens).